The primary structure comprises 336 residues: Holliday junction branch migration complex subunit RuvB (336 aa).

Positions 4–185 are large ATPase domain (RuvB-L); the sequence is MDERLLSGES…FGVLSRLEYY (182 aa). ATP is bound by residues L24, R25, G66, K69, T70, T71, 132–134, R175, Y185, and R222; that span reads EDF. A Mg(2+)-binding site is contributed by T70. The segment at 186–256 is small ATPAse domain (RuvB-S); the sequence is TVDQLSAIVE…ITQMALELLQ (71 aa). The interval 259–336 is head domain (RuvB-H); it reads KLGLDHIDHK…EHFGMEMPKV (78 aa). DNA-binding residues include R314 and R319.

It belongs to the RuvB family. As to quaternary structure, homohexamer. Forms an RuvA(8)-RuvB(12)-Holliday junction (HJ) complex. HJ DNA is sandwiched between 2 RuvA tetramers; dsDNA enters through RuvA and exits via RuvB. An RuvB hexamer assembles on each DNA strand where it exits the tetramer. Each RuvB hexamer is contacted by two RuvA subunits (via domain III) on 2 adjacent RuvB subunits; this complex drives branch migration. In the full resolvosome a probable DNA-RuvA(4)-RuvB(12)-RuvC(2) complex forms which resolves the HJ.

Its subcellular location is the cytoplasm. The enzyme catalyses ATP + H2O = ADP + phosphate + H(+). The RuvA-RuvB-RuvC complex processes Holliday junction (HJ) DNA during genetic recombination and DNA repair, while the RuvA-RuvB complex plays an important role in the rescue of blocked DNA replication forks via replication fork reversal (RFR). RuvA specifically binds to HJ cruciform DNA, conferring on it an open structure. The RuvB hexamer acts as an ATP-dependent pump, pulling dsDNA into and through the RuvAB complex. RuvB forms 2 homohexamers on either side of HJ DNA bound by 1 or 2 RuvA tetramers; 4 subunits per hexamer contact DNA at a time. Coordinated motions by a converter formed by DNA-disengaged RuvB subunits stimulates ATP hydrolysis and nucleotide exchange. Immobilization of the converter enables RuvB to convert the ATP-contained energy into a lever motion, pulling 2 nucleotides of DNA out of the RuvA tetramer per ATP hydrolyzed, thus driving DNA branch migration. The RuvB motors rotate together with the DNA substrate, which together with the progressing nucleotide cycle form the mechanistic basis for DNA recombination by continuous HJ branch migration. Branch migration allows RuvC to scan DNA until it finds its consensus sequence, where it cleaves and resolves cruciform DNA. The sequence is that of Holliday junction branch migration complex subunit RuvB from Bacillus cereus (strain ZK / E33L).